Consider the following 248-residue polypeptide: Probable transcriptional regulatory protein PsycPRwf_1013 (248 aa).

The protein belongs to the TACO1 family.

It is found in the cytoplasm. The polypeptide is Probable transcriptional regulatory protein PsycPRwf_1013 (Psychrobacter sp. (strain PRwf-1)).